The following is a 260-amino-acid chain: Putative serine protease 45 (260 aa).

The region spanning 1–234 is the Peptidase S1 domain; that stretch reads MTRHWPWEVS…YTKWIKKQMS (234 aa). A disulfide bridge connects residues Cys19 and Cys35. His34 acts as the Charge relay system in catalysis. N-linked (GlcNAc...) asparagine glycosylation occurs at Asn55. The Charge relay system role is filled by Asp82. Cystine bridges form between Cys116/Cys192, Cys151/Cys173, and Cys182/Cys210. Ser186 serves as the catalytic Charge relay system.

Belongs to the peptidase S1 family.

The chain is Putative serine protease 45 from Homo sapiens (Human).